Here is a 582-residue protein sequence, read N- to C-terminus: Max-binding protein MNT (582 aa).

The residue at position 2 (S2) is an N-acetylserine. The segment at 18–224 is disordered; sequence QQQQRAREEQ…RPGGIGTREV (207 aa). Positions 22–42 are enriched in basic and acidic residues; sequence RAREEQERLRLEQEREQEQKK. 2 stretches are compositionally biased toward pro residues: residues 61–82 and 99–108; these read EAPP…PLAT and QPLPPPPPLP. The segment covering 109 to 123 has biased composition (low complexity); it reads AAAQPLPLAPRQPAL. Composition is skewed to pro residues over residues 135–149 and 160–171; these read APLP…PAPL and NGSPKPLQPLPT. Over residues 203-214 the composition is skewed to basic and acidic residues; sequence PAEEVKSSEQKK. The bHLH domain occupies 220–271; the sequence is GTREVHNKLEKNRRAHLKECFETLKRNIPNVDDKKTSNLSVLRTALRYIQSL. The tract at residues 271–299 is leucine-zipper; sequence LKRKEKEYEHEMERLAREKIATQQRLAEL. The tract at residues 319-422 is disordered; it reads TGQPEDDQAS…PPPPAAPAQT (104 aa). Over residues 334-345 the composition is skewed to acidic residues; the sequence is EGEDNIDEDMEE. Residues 368-381 are compositionally biased toward pro residues; that stretch reads LPPPSTTPAPLPPH. Over residues 387–408 the composition is skewed to low complexity; the sequence is HSVALPPAHLPVQQQQPQQKTP. A compositionally biased stretch (pro residues) spans 409-418; sequence LPAPPPPPAA.

In terms of assembly, efficient DNA binding requires dimerization with another bHLH protein. Binds DNA as a homodimer or a heterodimer with MAX.

It is found in the nucleus. Functionally, binds DNA as a heterodimer with MAX and represses transcription. Binds to the canonical E box sequence 5'-CACGTG-3' and, with higher affinity, to 5'-CACGCG-3'. In Homo sapiens (Human), this protein is Max-binding protein MNT (MNT).